A 184-amino-acid chain; its full sequence is PXMP2/4 family protein 3 (184 aa).

Positions 1-44 are cleaved as a signal peptide; the sequence is MSNSKPLSLTDAVTTWYMKKLKSKPIQTKALTSATLSFISSVVA. Transmembrane regions (helical) follow at residues 58–78, 97–117, and 159–179; these read VVKFTVWGLISSPLVHYWHII, IVDQLVFAPFINIAFYSVLAI, and LRVLFGNLVGFCWGIYLSILA.

It belongs to the peroxisomal membrane protein PXMP2/4 family.

Its subcellular location is the membrane. This Dictyostelium discoideum (Social amoeba) protein is PXMP2/4 family protein 3.